Consider the following 1806-residue polypeptide: Non-reducing polyketide synthase pks12 (1806 aa).

Residues Thr-30 to His-191 enclose the Starter acyltransferase (SAT) domain. The Ketosynthase family 3 (KS3) domain occupies Glu-330–Glu-755. Active-site for beta-ketoacyl synthase activity residues include Cys-504, His-639, and His-678. The interval Leu-860–Gly-1156 is malonyl-CoA:ACP transacylase (MAT) domain. Positions Phe-862 to His-1147 constitute a Malonyl-CoA:ACP transacylase (MAT) domain. Ser-947 functions as the For acyl/malonyl transferase activity in the catalytic mechanism. The interval Pro-1249 to Asp-1383 is N-terminal hotdog fold. The region spanning Pro-1249–Glu-1558 is the PKS/mFAS DH domain. Residues Pro-1249–Glu-1558 form a product template (PT) domain region. Catalysis depends on His-1288, which acts as the Proton acceptor; for dehydratase activity. The C-terminal hotdog fold stretch occupies residues Ser-1404 to Glu-1558. The active-site Proton donor; for dehydratase activity is the Asp-1468. The region spanning Gln-1727–Ser-1804 is the Carrier domain. Residue Ser-1764 is modified to O-(pantetheine 4'-phosphoryl)serine.

It depends on pantetheine 4'-phosphate as a cofactor.

Its pathway is secondary metabolite biosynthesis. In terms of biological role, non-reducing polyketide synthase; part of the gene cluster that mediates the biosynthesis of mitorubrinol and mitorubrinic acid, two virulence factors that improve T.marneffei intracellular survival in macrophages. The two polyketide synthases pks12 and pks11 are probably responsible for sequential use in the biosynthesis of mitorubrinol and mitorubrinic acid. The first part of the biosynthesis is probably catalyzed by pks12, which synthesized orsellinic acid. This tetraketide is then used as a starter unit for pks11, which possesses a SAT domain, in the second part of the biosynthesis. Pks11, contains a methyltransferase domain, also served that methylates the products, using a methyl group from S-adenosylmethionine. The protein is Non-reducing polyketide synthase pks12 of Talaromyces marneffei (Penicillium marneffei).